An 80-amino-acid chain; its full sequence is Small ribosomal subunit protein bS16 (80 aa).

Belongs to the bacterial ribosomal protein bS16 family.

The chain is Small ribosomal subunit protein bS16 from Wigglesworthia glossinidia brevipalpis.